The sequence spans 545 residues: Membrane protein insertase YidC (545 aa).

4 helical membrane-spanning segments follow: residues 350-370 (IIGNWGWAIVVLTIIVKAVLY), 424-444 (LPMLLQIPVFIGLYWALFASV), 461-481 (ADPYYILPIIMAATMFAQTYL), and 498-518 (PLVFSVMFFFFPAGLVLYWVV).

This sequence belongs to the OXA1/ALB3/YidC family. Type 1 subfamily. Interacts with the Sec translocase complex via SecD. Specifically interacts with transmembrane segments of nascent integral membrane proteins during membrane integration.

It is found in the cell inner membrane. Its function is as follows. Required for the insertion and/or proper folding and/or complex formation of integral membrane proteins into the membrane. Involved in integration of membrane proteins that insert both dependently and independently of the Sec translocase complex, as well as at least some lipoproteins. Aids folding of multispanning membrane proteins. The chain is Membrane protein insertase YidC from Neisseria gonorrhoeae (strain ATCC 700825 / FA 1090).